We begin with the raw amino-acid sequence, 490 residues long: Prostaglandin E2 receptor EP4 subtype (490 aa).

Residues 1–19 (MSTPGVNASASLSPDRLNS) are Extracellular-facing. An N-linked (GlcNAc...) asparagine glycan is attached at asparagine 7. A helical membrane pass occupies residues 20–43 (PVTIPAVMFIFGVVGNLVAIVVLC). The Cytoplasmic segment spans residues 44-55 (KSRKEQKETTFY). Residues 56–79 (TLVCGLAVTDLLGTLLVSPVTIAT) form a helical membrane-spanning segment. At 80-96 (YMKGQWPGGQPLCEYST) the chain is on the extracellular side. Cysteine 92 and cysteine 170 are joined by a disulfide. Residues 97–115 (FILLFFSLSGLSIICAMSV) traverse the membrane as a helical segment. The Cytoplasmic portion of the chain corresponds to 116–135 (ERYLAINHAYFYSHYVDKRL). A helical transmembrane segment spans residues 136–160 (AGLTLFAVYASNVLFCALPNMGLGS). At 161–184 (SRLQYPDTWCFIDWTTNVTAHAAY) the chain is on the extracellular side. A helical membrane pass occupies residues 185-211 (SYMYAGFSSFLILATVLCNVLVCGALL). Over 212–269 (RMHRQFMRRTSLGTEQHHAAAAAVTSVASRGHPAASPALPRLSDFRRRRSFRRIAGAE) the chain is Cytoplasmic. Residues 270–297 (IQMVILLIATSLVVLICSIPLVVRVFVN) form a helical membrane-spanning segment. Topologically, residues 298–314 (QLYQPSLEREVSKNPDL) are extracellular. Residues 315-334 (QAIRIASVNPILDPWIYILL) form a helical membrane-spanning segment. Topologically, residues 335-490 (RKTVLSKAIE…ETLNLSEKCI (156 aa)) are cytoplasmic. The disordered stretch occupies residues 359-378 (ERSGQHCSDSQRTSSAMSGH). Over residues 363–378 (QHCSDSQRTSSAMSGH) the composition is skewed to polar residues. Phosphoserine occurs at positions 376, 379, 381, and 384. Residues 439–451 (SETSDSSQGQDSE) are compositionally biased toward polar residues. The tract at residues 439-477 (SETSDSSQGQDSESVLLVDEAGGSGRAGPAPKGSSLQVT) is disordered.

This sequence belongs to the G-protein coupled receptor 1 family. In terms of assembly, interacts with FEM1A. In terms of processing, phosphorylation mediates agonist-mediated desensitization by promoting cytoplasmic retention.

It is found in the cell membrane. Functionally, receptor for prostaglandin E2 (PGE2). The activity of this receptor is mediated by G(s) proteins that stimulate adenylate cyclase. Has a relaxing effect on smooth muscle. May play an important role in regulating renal hemodynamics, intestinal epithelial transport, adrenal aldosterone secretion, and uterine function. The protein is Prostaglandin E2 receptor EP4 subtype (PTGER4) of Pan troglodytes (Chimpanzee).